The following is a 618-amino-acid chain: DNA mismatch repair protein MutL (618 aa).

Residues 348–359 (QTDTARSPTGNF) show a composition bias toward polar residues. A disordered region spans residues 348-400 (QTDTARSPTGNFESGEVFDYPKSQLQPSHSVSSGGASLGSRSAGGSGGAYRAT). Over residues 377-388 (SVSSGGASLGSR) the composition is skewed to low complexity.

The protein belongs to the DNA mismatch repair MutL/HexB family.

In terms of biological role, this protein is involved in the repair of mismatches in DNA. It is required for dam-dependent methyl-directed DNA mismatch repair. May act as a 'molecular matchmaker', a protein that promotes the formation of a stable complex between two or more DNA-binding proteins in an ATP-dependent manner without itself being part of a final effector complex. This is DNA mismatch repair protein MutL from Pseudoalteromonas translucida (strain TAC 125).